We begin with the raw amino-acid sequence, 551 residues long: Eukaryotic translation initiation factor 3 subunit D-2 (551 aa).

The tract at residues asparagine 105–arginine 152 is disordered. Positions alanine 119–alanine 128 are enriched in gly residues. The interval glutamine 290–proline 304 is RNA gate.

Belongs to the eIF-3 subunit D family. Component of the eukaryotic translation initiation factor 3 (eIF-3) complex. The eIF-3 complex interacts with pix.

It is found in the cytoplasm. Its function is as follows. mRNA cap-binding component of the eukaryotic translation initiation factor 3 (eIF-3) complex, which is involved in protein synthesis of a specialized repertoire of mRNAs and, together with other initiation factors, stimulates binding of mRNA and methionyl-tRNAi to the 40S ribosome. The eIF-3 complex specifically targets and initiates translation of a subset of mRNAs involved in cell proliferation. In the eIF-3 complex, eif3d specifically recognizes and binds the 7-methylguanosine cap of a subset of mRNAs. In Drosophila erecta (Fruit fly), this protein is Eukaryotic translation initiation factor 3 subunit D-2.